The sequence spans 502 residues: Cytochrome P450 81D1 (502 aa).

Residues I6–L26 form a helical membrane-spanning segment. Residue C440 coordinates heme.

This sequence belongs to the cytochrome P450 family. It depends on heme as a cofactor.

The protein resides in the membrane. In Arabidopsis thaliana (Mouse-ear cress), this protein is Cytochrome P450 81D1 (CYP81D1).